The sequence spans 243 residues: Ribonuclease 3 (243 aa).

The RNase III domain occupies F19–G144. Position 61 (E61) interacts with Mg(2+). D65 is a catalytic residue. Mg(2+)-binding residues include N130 and E133. E133 is an active-site residue. In terms of domain architecture, DRBM spans S172–N240.

It belongs to the ribonuclease III family. In terms of assembly, homodimer. Mg(2+) serves as cofactor.

Its subcellular location is the cytoplasm. The catalysed reaction is Endonucleolytic cleavage to 5'-phosphomonoester.. In terms of biological role, digests double-stranded RNA. Involved in the processing of primary rRNA transcript to yield the immediate precursors to the large and small rRNAs (23S and 16S). Processes some mRNAs, and tRNAs when they are encoded in the rRNA operon. Processes pre-crRNA and tracrRNA of type II CRISPR loci if present in the organism. This Zunongwangia profunda (strain DSM 18752 / CCTCC AB 206139 / SM-A87) (Wangia profunda) protein is Ribonuclease 3 (rnc).